Reading from the N-terminus, the 328-residue chain is uncharacterized protein (328 aa).

The Bro-N domain maps to 3–126; it reads RVKIGEFKFG…EVIPQVLCTG (124 aa).

This is an uncharacterized protein from Autographa californica nuclear polyhedrosis virus (AcMNPV).